Here is a 324-residue protein sequence, read N- to C-terminus: PDZ domain-containing protein MAGIX (324 aa).

The interval 1 to 26 (MDSRAGNTADPRGGRRGGGLQGSRSP) is disordered. The PDZ domain maps to 128-212 (SVELTRGPAG…HLCLVLQRPQ (85 aa)). Residues 216–241 (GSRIKEVGGHRKTDRSLDPRGSRVES) are compositionally biased toward basic and acidic residues. A disordered region spans residues 216–263 (GSRIKEVGGHRKTDRSLDPRGSRVESRSTISPVHHRPKTRTSPRPSPE). The residue at position 261 (serine 261) is a Phosphoserine.

This Mus musculus (Mouse) protein is PDZ domain-containing protein MAGIX (Magix).